A 668-amino-acid chain; its full sequence is Phosphatidylinositol 4-phosphate 5-kinase type-1 gamma (668 aa).

Residues 45–67 form a disordered region; the sequence is SMTAQPGPGHGKKLGHRGVDASG. A PIPK domain is found at 75–443; it reads TSSTLKGAIQ…RFFKFMSNTV (369 aa). Lys265 and Lys268 each carry N6-acetyllysine. Asymmetric dimethylarginine; alternate is present on Arg459. Arg459 is modified (omega-N-methylarginine; alternate). Positions 526–535 are enriched in low complexity; that stretch reads TTLSSTSLSI. 2 disordered regions span residues 526-578 and 593-642; these read TTLS…ITVQ and EDAG…YFPT. Residue Ser555 is modified to Phosphoserine. A Phosphotyrosine; by EGFR modification is found at Tyr639. The interval 641–668 is mediates interaction with TLN2; the sequence is PTDERSWVYSPLHYSAQAPPASDGESDT. The residue at position 649 (Tyr649) is a Phosphotyrosine; by CSK. Ser650 carries the phosphoserine; by CDK5, MAPK1 and CDK1 modification. A phosphoserine mark is found at Ser662 and Ser666. Thr668 carries the phosphothreonine modification.

As to quaternary structure, interacts with TLN1. Interacts with TLN2; interaction stimulates 1-phosphatidylinositol-4-phosphate 5-kinase activity. May compete with beta-integrins for the same binding site on TLN1 and TLN2. Interacts with ARF6; interaction stimulates 1-phosphatidylinositol-4-phosphate 5-kinase activity. Interacts with AP2B1. Interacts with AP2M1; phosphorylation of PIP5K1C by CSK disrupts the interaction; clathrin competes with PIP5K1C. Interacts with CDH1. Interacts with CSK. Interacts with PLCG1; interaction is abolished upon EGF stimulation. Interacts with LAPTM4B; promotes SNX5 association with LAPTM4B; kinase activity of PIP5K1C is required; interaction is regulated by phosphatidylinositol 4,5-bisphosphate generated by PIP5K1C. Post-translationally, phosphorylation on Ser-650 negatively regulates binding to TLN2 and is strongly stimulated in mitosis. Phosphorylation on Tyr-649 is necessary for targeting to focal adhesions. Phosphorylation on Ser-650 and Tyr-649 are mutually exclusive. Phosphorylated by SYK and CSK. Tyrosine phosphorylation is enhanced by PTK2 signaling. Phosphorylated at Tyr-639 upon EGF stimulation. Some studies suggest that phosphorylation on Tyr-649 enhances binding to tailins (TLN1 and TLN2). According to PubMed:15738269 phosphorylation at Tyr-649 does not directly enhance binding to tailins (TLN1 and TLN2) but may act indirectly by inhibiting phosphorylation at Ser-650. In terms of processing, acetylation at Lys-265 and Lys-268 seems to decrease lipid 1-phosphatidylinositol-4-phosphate 5-kinase activity. Deacetylation of these sites by SIRT1 positively regulates the exocytosis of TSH-containing granules from pituitary cells. Isoform 1 is strongly expressed in brain and also detected in heart and lung. As to expression, isoform 2 is strongly expressed in pancreas and liver and in lesser quantities in brain, heart, lung and kidney. In terms of tissue distribution, isoform 3 is detected in large amounts in heart and large intestine, is also present in lung, pancreas and thyroid, and to a lesser extent in brain, stomach and kidney.

Its subcellular location is the cell membrane. It is found in the endomembrane system. It localises to the cytoplasm. The protein localises to the cell junction. The protein resides in the focal adhesion. Its subcellular location is the adherens junction. It is found in the cell projection. It localises to the ruffle membrane. The protein localises to the phagocytic cup. The protein resides in the uropodium. Its subcellular location is the nucleus. The enzyme catalyses a 1,2-diacyl-sn-glycero-3-phospho-(1D-myo-inositol 4-phosphate) + ATP = a 1,2-diacyl-sn-glycero-3-phospho-(1D-myo-inositol-4,5-bisphosphate) + ADP + H(+). The catalysed reaction is 1-octadecanoyl-2-(5Z,8Z,11Z,14Z)-eicosatetraenoyl-sn-glycero-3-phospho-1D-myo-inositol 4-phosphate + ATP = 1-octadecanoyl-2-(5Z,8Z,11Z,14Z)-eicosatetraenoyl-sn-glycero-3-phospho-1D-myo-inositol 4,5-bisphosphate + ADP + H(+). It carries out the reaction 1-octadecanoyl-2-(9Z)-octadecenoyl-sn-glycero-3-phospho-1D-myo-inositol 4-phosphate + ATP = 1-octadecanoyl-2-(9Z)-octadecenoyl-sn-glycero-3-phospho-1D-myo-inositol 4,5-bisphosphate + ADP + H(+). It catalyses the reaction 1-octadecanoyl-2-(9Z)-octadecenoyl-sn-glycero-3-phospho-1D-myo-inositol + ATP = 1-octadecanoyl-2-(9Z)-octadecenoyl-sn-glycero-3-phospho-1D-myo-inositol 5-phosphate + ADP + H(+). The enzyme catalyses 1-octadecanoyl-2-(9Z,12Z)-octadecadienoyl-sn-glycero-3-phospho-1D-myo-inositol + ATP = 1-octadecanoyl-2-(9Z,12Z)-octadecadienoyl-sn-glycero-3-phospho-1D-myo-inositol 5-phosphate + ADP + H(+). The catalysed reaction is 1-octadecanoyl-2-(5Z,8Z,11Z,14Z-eicosatetraenoyl)-sn-glycero-3-phospho-(1D-myo-inositol) + ATP = 1-octadecanoyl-2-(5Z,8Z,11Z,14Z)-eicosatetraenoyl-sn-glycero-3-phospho-1D-myo-inositol 5-phosphate + ADP + H(+). It carries out the reaction 1,2-di-(9Z,12Z)-octadecadienoyl-sn-glycero-3-phospho-1D-myo-inositol + ATP = 1,2-di(9Z,12Z)-octadecadienoyl-sn-glycero-3-phospho-1D-myo-inositol 5-phosphate + ADP + H(+). Functionally, catalyzes the phosphorylation of phosphatidylinositol 4-phosphate (PtdIns(4)P/PI4P) to form phosphatidylinositol 4,5-bisphosphate (PtdIns(4,5)P2/PIP2), a lipid second messenger that regulates several cellular processes such as signal transduction, vesicle trafficking, actin cytoskeleton dynamics, cell adhesion, and cell motility. PtdIns(4,5)P2 can directly act as a second messenger or can be utilized as a precursor to generate other second messengers: inositol 1,4,5-trisphosphate (IP3), diacylglycerol (DAG) or phosphatidylinositol-3,4,5-trisphosphate (PtdIns(3,4,5)P3/PIP3). PIP5K1A-mediated phosphorylation of PtdIns(4)P is the predominant pathway for PtdIns(4,5)P2 synthesis. Together with PIP5K1A, is required for phagocytosis, both enzymes regulating different types of actin remodeling at sequential steps. Promotes particle attachment by generating the pool of PtdIns(4,5)P2 that induces controlled actin depolymerization to facilitate Fc-gamma-R clustering. Mediates RAC1-dependent reorganization of actin filaments. Required for synaptic vesicle transport. Controls the plasma membrane pool of PtdIns(4,5)P2 implicated in synaptic vesicle endocytosis and exocytosis. Plays a role in endocytosis mediated by clathrin and AP-2 (adaptor protein complex 2). Required for clathrin-coated pits assembly at the synapse. Participates in cell junction assembly. Modulates adherens junctions formation by facilitating CDH1/cadherin trafficking. Required for focal adhesion dynamics. Modulates the targeting of talins (TLN1 and TLN2) to the plasma membrane and their efficient assembly into focal adhesions. Regulates the interaction between talins (TLN1 and TLN2) and beta-integrins. Required for uropodium formation and retraction of the cell rear during directed migration. Has a role in growth factor-stimulated directional cell migration and adhesion. Required for talin assembly into nascent adhesions forming at the leading edge toward the direction of the growth factor. Negative regulator of T-cell activation and adhesion. Negatively regulates integrin alpha-L/beta-2 (LFA-1) polarization and adhesion induced by T-cell receptor. Together with PIP5K1A has a role during embryogenesis and together with PIP5K1B may have a role immediately after birth. The sequence is that of Phosphatidylinositol 4-phosphate 5-kinase type-1 gamma from Homo sapiens (Human).